The following is a 251-amino-acid chain: Flap endonuclease Xni (251 aa).

D104 serves as a coordination point for Mg(2+). In terms of domain architecture, 5'-3' exonuclease spans 160-249; that stretch reads VLPRQLPDYW…IDGNLQQLRL (90 aa). Residues L171, A172, P180, V182, and I185 each contribute to the K(+) site. The interval 184–189 is interaction with DNA; it reads GIGPKS.

The protein belongs to the Xni family. Mg(2+) serves as cofactor. The cofactor is K(+).

Functionally, has flap endonuclease activity. During DNA replication, flap endonucleases cleave the 5'-overhanging flap structure that is generated by displacement synthesis when DNA polymerase encounters the 5'-end of a downstream Okazaki fragment. The protein is Flap endonuclease Xni of Salmonella heidelberg (strain SL476).